The chain runs to 624 residues: DNA damage response protein Mdb1 (624 aa).

Disordered stretches follow at residues 177–237 (ERIP…DDES), 249–386 (GETK…KNKH), and 591–624 (IGKR…EQRT). Composition is skewed to basic and acidic residues over residues 200 to 217 (DEKL…HSSD) and 225 to 235 (EDQKQLNKTDD). Over residues 250–263 (ETKSPSSVSQSLSG) the composition is skewed to polar residues. Phosphoserine is present on residues serine 253 and serine 283. Positions 294-305 (NISDSSIKNNSI) are enriched in low complexity. 2 stretches are compositionally biased toward basic and acidic residues: residues 306-316 (HSDEVNPEVRP) and 325-352 (EESK…REAE). A compositionally biased stretch (polar residues) spans 356–386 (ISTNYSFPSSSLEDQPDKNVQSSAVENKNKH). The region spanning 376 to 468 (QSSAVENKNK…KVLDFRSYKY (93 aa)) is the BRCT domain.

Homodimer. Interacts (via BRCT domain) with hta1 peptide containing the S/T-Q motif in vitro; this interaction requires phosphorylation of the hta1 peptide at the S/T-Q motif.

The protein localises to the nucleus. Its subcellular location is the chromosome. The protein resides in the cytoplasm. It localises to the cytoskeleton. It is found in the spindle. Functionally, involved in DNA damage response (DDR) mediated through its interaction with phosphorylated H2A proteins hta1 and hta2 which mark the discrete foci of DNA damage. The sequence is that of DNA damage response protein Mdb1 from Schizosaccharomyces pombe (strain 972 / ATCC 24843) (Fission yeast).